The following is a 153-amino-acid chain: Riboflavin synthase (153 aa).

The protein belongs to the DMRL synthase family.

The enzyme catalyses 2 6,7-dimethyl-8-(1-D-ribityl)lumazine + H(+) = 5-amino-6-(D-ribitylamino)uracil + riboflavin. The protein operates within cofactor biosynthesis; riboflavin biosynthesis; riboflavin from 2-hydroxy-3-oxobutyl phosphate and 5-amino-6-(D-ribitylamino)uracil: step 2/2. The protein is Riboflavin synthase (ribC) of Archaeoglobus fulgidus (strain ATCC 49558 / DSM 4304 / JCM 9628 / NBRC 100126 / VC-16).